The primary structure comprises 153 residues: Large ribosomal subunit protein uL13 (153 aa).

Residues Ser128–Ala153 are disordered. Over residues Thr143–Ala153 the composition is skewed to polar residues.

Belongs to the universal ribosomal protein uL13 family. As to quaternary structure, part of the 50S ribosomal subunit.

In terms of biological role, this protein is one of the early assembly proteins of the 50S ribosomal subunit, although it is not seen to bind rRNA by itself. It is important during the early stages of 50S assembly. The protein is Large ribosomal subunit protein uL13 of Roseobacter denitrificans (strain ATCC 33942 / OCh 114) (Erythrobacter sp. (strain OCh 114)).